We begin with the raw amino-acid sequence, 356 residues long: Histidinol-phosphate aminotransferase 2 (356 aa).

An N6-(pyridoxal phosphate)lysine modification is found at Lys213.

The protein belongs to the class-II pyridoxal-phosphate-dependent aminotransferase family. Histidinol-phosphate aminotransferase subfamily. In terms of assembly, homodimer. The cofactor is pyridoxal 5'-phosphate.

It catalyses the reaction L-histidinol phosphate + 2-oxoglutarate = 3-(imidazol-4-yl)-2-oxopropyl phosphate + L-glutamate. The protein operates within amino-acid biosynthesis; L-histidine biosynthesis; L-histidine from 5-phospho-alpha-D-ribose 1-diphosphate: step 7/9. In Burkholderia mallei (strain ATCC 23344), this protein is Histidinol-phosphate aminotransferase 2.